The sequence spans 309 residues: Homoserine kinase (309 aa).

An ATP-binding site is contributed by Pro91 to Cys101.

It belongs to the GHMP kinase family. Homoserine kinase subfamily.

It localises to the cytoplasm. The enzyme catalyses L-homoserine + ATP = O-phospho-L-homoserine + ADP + H(+). Its pathway is amino-acid biosynthesis; L-threonine biosynthesis; L-threonine from L-aspartate: step 4/5. Functionally, catalyzes the ATP-dependent phosphorylation of L-homoserine to L-homoserine phosphate. The polypeptide is Homoserine kinase (Serratia proteamaculans (strain 568)).